A 202-amino-acid chain; its full sequence is UPF0301 protein Meso_0753 (202 aa).

Belongs to the UPF0301 (AlgH) family.

In Chelativorans sp. (strain BNC1), this protein is UPF0301 protein Meso_0753.